Reading from the N-terminus, the 188-residue chain is Large ribosomal subunit protein bL35m (188 aa).

This sequence belongs to the bacterial ribosomal protein bL35 family.

It is found in the mitochondrion. The protein is Large ribosomal subunit protein bL35m (Mrpl35) of Mus musculus (Mouse).